Here is a 418-residue protein sequence, read N- to C-terminus: UDP-N-acetylglucosamine 1-carboxyvinyltransferase (418 aa).

Position 22–23 (22–23 (KN)) interacts with phosphoenolpyruvate. R93 serves as a coordination point for UDP-N-acetyl-alpha-D-glucosamine. C117 serves as the catalytic Proton donor. C117 is modified (2-(S-cysteinyl)pyruvic acid O-phosphothioketal). UDP-N-acetyl-alpha-D-glucosamine is bound by residues D305 and V327.

The protein belongs to the EPSP synthase family. MurA subfamily.

It localises to the cytoplasm. The enzyme catalyses phosphoenolpyruvate + UDP-N-acetyl-alpha-D-glucosamine = UDP-N-acetyl-3-O-(1-carboxyvinyl)-alpha-D-glucosamine + phosphate. It functions in the pathway cell wall biogenesis; peptidoglycan biosynthesis. Cell wall formation. Adds enolpyruvyl to UDP-N-acetylglucosamine. This chain is UDP-N-acetylglucosamine 1-carboxyvinyltransferase, found in Alkalilimnicola ehrlichii (strain ATCC BAA-1101 / DSM 17681 / MLHE-1).